The following is a 329-amino-acid chain: Anthranilate phosphoribosyltransferase (329 aa).

Residues Gly-78, 81-82 (GD), 88-91 (NLST), 106-114 (KHGNRAASS), and Ser-118 contribute to the 5-phospho-alpha-D-ribose 1-diphosphate site. Gly-78 is a binding site for anthranilate. Ser-90 provides a ligand contact to Mg(2+). Asn-109 provides a ligand contact to anthranilate. Residue Arg-164 coordinates anthranilate. Residues Asp-221 and Glu-222 each coordinate Mg(2+).

It belongs to the anthranilate phosphoribosyltransferase family. As to quaternary structure, homodimer. The cofactor is Mg(2+).

It carries out the reaction N-(5-phospho-beta-D-ribosyl)anthranilate + diphosphate = 5-phospho-alpha-D-ribose 1-diphosphate + anthranilate. The protein operates within amino-acid biosynthesis; L-tryptophan biosynthesis; L-tryptophan from chorismate: step 2/5. Catalyzes the transfer of the phosphoribosyl group of 5-phosphorylribose-1-pyrophosphate (PRPP) to anthranilate to yield N-(5'-phosphoribosyl)-anthranilate (PRA). This Thermus thermophilus (strain ATCC BAA-163 / DSM 7039 / HB27) protein is Anthranilate phosphoribosyltransferase.